Here is a 422-residue protein sequence, read N- to C-terminus: Zinc finger and BTB domain-containing protein 42 (422 aa).

In terms of domain architecture, BTB spans 24–92; sequence CDCTVLVGDA…MYEGRLDLRS (69 aa). Disordered regions lie at residues 121-141, 166-188, and 207-256; these read KDRSLDPGNPAPGAEPAQPPC, AALPPRASGPPPCQVPEESDQAL, and LQTP…AAKG. The span at 243–252 shows a compositional bias: pro residues; it reads HSPPKPPPVP. 4 C2H2-type zinc fingers span residues 294–316, 334–356, 362–384, and 390–413; these read CICPLCSKLFPSSHVLQLHLSAH, PTCPLCGKTFSCTYTLKRHERTH, YTCVQCGKSFQYSHNLSRHTVVH, and HACRWCERRFTQSGDLYRHVRKFH.

It belongs to the krueppel C2H2-type zinc-finger protein family. ZBTB18 subfamily. As to expression, expressed in skeletal muscle (at protein level).

The protein resides in the cytoplasm. Its subcellular location is the nucleus. The protein localises to the nucleoplasm. Its function is as follows. Transcriptional repressor. Specifically binds DNA and probably acts by recruiting chromatin remodeling multiprotein complexes. This chain is Zinc finger and BTB domain-containing protein 42 (ZBTB42), found in Homo sapiens (Human).